A 278-amino-acid chain; its full sequence is Tryptophan synthase alpha chain (278 aa).

Catalysis depends on proton acceptor residues E50 and D61.

Belongs to the TrpA family. In terms of assembly, tetramer of two alpha and two beta chains.

The enzyme catalyses (1S,2R)-1-C-(indol-3-yl)glycerol 3-phosphate + L-serine = D-glyceraldehyde 3-phosphate + L-tryptophan + H2O. Its pathway is amino-acid biosynthesis; L-tryptophan biosynthesis; L-tryptophan from chorismate: step 5/5. Its function is as follows. The alpha subunit is responsible for the aldol cleavage of indoleglycerol phosphate to indole and glyceraldehyde 3-phosphate. This Rhodopseudomonas palustris (strain ATCC BAA-98 / CGA009) protein is Tryptophan synthase alpha chain.